Here is a 148-residue protein sequence, read N- to C-terminus: Zinc finger X-chromosomal protein (148 aa).

2 C2H2-type zinc fingers span residues 16–38 (IECD…KMVH) and 76–98 (HICV…MRIH).

Belongs to the krueppel C2H2-type zinc-finger protein family. ZFX/ZFY subfamily.

Its subcellular location is the nucleus. Its function is as follows. Probable transcriptional activator. This is Zinc finger X-chromosomal protein (ZFX) from Sus scrofa (Pig).